The chain runs to 227 residues: MKVSYHGHSVVKIETNGKVIVIDPFLTGNPKTDLKAEDVKVDAILLSHGHGDHVGDTVELAKKNNAVVVAPFELATFLSWQGVKTHPMHIGGSHEFDFGKVKFTQAFHGSSYIDEENKTITYTGMPAGILFTAEEKTVYHAGDTALFSDMKLIGELNNVDVAFLPIGDNFTMGPEDAVLAAKWVQAKTVVPMHYNTFPVIEQDPYQFVEKLQNCTGKVLEAGESITL.

The protein belongs to the UPF0173 family.

This is UPF0173 metal-dependent hydrolase BCAH187_A4741 from Bacillus cereus (strain AH187).